We begin with the raw amino-acid sequence, 209 residues long: Lysine-rich arabinogalactan protein 18 (209 aa).

Residues 1–21 (MDRNFLLTVTLICIVVAGVGG) form the signal peptide. Residues 21–185 (GQSPISSPTK…PSADDQSGAA (165 aa)) are disordered. Positions 23-79 (SPISSPTKSPTTPSAPTTSPTKSPAVTSPTTAPAKTPTASASSPVESPKSPAPVSES) are enriched in low complexity. Composition is skewed to pro residues over residues 80–95 (SPPP…PVPA) and 103–119 (SSPP…PAPV). Residues 132-145 (SKHKKTTKKSKKHQ) show a composition bias toward basic residues. The span at 149–164 (APAPELLGPPAPPTES) shows a compositional bias: pro residues. G183 carries GPI-anchor amidated glycine lipidation. Positions 184 to 209 (AASTRVLRNVAVGAVATAWAVLVMAF) are cleaved as a propeptide — removed in mature form.

Belongs to the lysine-rich AGP family. O-glycosylated on the hydroxyproline residues. In terms of tissue distribution, predominantly expressed in flowers, and moderately expressed in roots, stems and young leaves.

The protein localises to the cell membrane. In terms of biological role, proteoglycan that seems to be implicated in diverse developmental roles such as differentiation, cell-cell recognition, embryogenesis and programmed cell death. The sequence is that of Lysine-rich arabinogalactan protein 18 (AGP18) from Arabidopsis thaliana (Mouse-ear cress).